The chain runs to 126 residues: Profilin-1B (126 aa).

Residues 2–36 (SWQTYVDTNLVGTGAVTQAAILGLDGNTWATSAGF) form an actin binding region. An N6,N6,N6-trimethyllysine modification is found at lysine 104.

The protein belongs to the profilin family. As to quaternary structure, occurs in many kinds of cells as a complex with monomeric actin in a 1:1 ratio.

It is found in the cytoplasm. The protein localises to the cytoskeleton. In terms of biological role, binds to actin and affects the structure of the cytoskeleton. At high concentrations, profilin prevents the polymerization of actin, whereas it enhances it at low concentrations. By binding to PIP2, it inhibits the formation of IP3 and DG. The protein is Profilin-1B of Acanthamoeba castellanii (Amoeba).